A 613-amino-acid chain; its full sequence is Immunoglobulin superfamily member 8 (613 aa).

A signal peptide spans 1 to 27 (MGALRPTLLPPSLPLLLLLMLGMGCWA). Ig-like C2-type domains are found at residues 28–149 (REVL…LRVL), 162–286 (PRGR…WAQI), 303–424 (SQLA…EAAS), and 431–560 (PVHV…WYQA). Topologically, residues 28-579 (REVLVPEGPL…VYPYMHALDT (552 aa)) are extracellular. C49 and C127 form a disulfide bridge. An N-linked (GlcNAc...) asparagine glycan is attached at N50. Residues 155-174 (VSAAPPGPRGRQAPTSPPRM) form a disordered region. C186 and C270 are joined by a disulfide. The EWI motif motif lies at 274-276 (EWI). Disulfide bonds link C326–C406 and C462–C544. 2 N-linked (GlcNAc...) asparagine glycosylation sites follow: N327 and N463. Residue S518 is modified to Phosphoserine. Residues 580-600 (LFVPLLVGTGVALVTGATVLG) traverse the membrane as a helical segment. Residues 601–613 (TITCCFMKRLRKR) are Cytoplasmic-facing. Residues C604 and C605 are each lipidated (S-palmitoyl cysteine).

As to quaternary structure, interacts directly with CD82, CD81/tetraspanin-28 and CD9/tetraspanin-29. Also interacts with integrin alpha-3/beta-1 and integrin alpha-4/beta-1. Interacts with HSPA8; this interaction modulates migratory and antigen-presenting capacities of dendritic cells. In terms of tissue distribution, expressed in brain, kidney, testis, liver and placenta with moderate expression in all other tissues. Detected on a majority of B-cells, T-cells, and natural killer cells. Expressed on dendritic cells.

It is found in the cell membrane. In terms of biological role, member of the immunoglobulin superfamily (IgSF) that links tetraspanin-enriched microdomains to the actin cytoskeleton and plays several important roles in innate and adaptive immunity. Acts as an inducible receptor of HSPA8 on dendritic cells to enhance the CCL21/SLC-dependent migration of activated mature dendritic cells while attenuating their antigen-specific stimulatory capacities. In complex with alpha-actinins ACTN1 and ACTN4, regulates actin dynamics in the immune synapse and subsequent T-cell activation. Inhibits the entry of several viruses such as hepatitis C Virus (HCV) or HIV-1. Mechanistically, promotes a change in CD81 organization at the plasma membrane by significantly restricting its diffusion which in turn influences CD81 interaction with Claudin-1/CLDN1, preventing CLDN1 from acting as a co-receptor required for HCV entry. Accumulates at the presynaptic terminal, the producer cell side of the virological synapse, to prevent HIV-1 Env-mediated cell-cell fusion. Highly expressed on malignant cells with antigen presentation defects, interacts with NK receptor KIR3DL2 to suppress NK-cell cytotoxicity. May participate in the regulation of neurite outgrowth and maintenance of the neural network in the adult brain. In Homo sapiens (Human), this protein is Immunoglobulin superfamily member 8 (IGSF8).